Reading from the N-terminus, the 298-residue chain is ADP-ribosyl cyclase/cyclic ADP-ribose hydrolase 1 (298 aa).

Residues 1-21 are Cytoplasmic-facing; it reads MPDYEFSPASGDRPRSWISKQ. The helical; Signal-anchor for type II membrane protein transmembrane segment at 22–42 threads the bilayer; that stretch reads VLIVLGVCLPVILALAIWVGV. The Extracellular portion of the chain corresponds to 43–298; the sequence is LTWRQSSMGA…PEHPSCSVLM (256 aa). 3 disulfide bridges follow: Cys64–Cys80, Cys97–Cys178, and Cys158–Cys171. An N-linked (GlcNAc...) asparagine glycan is attached at Asn98. The active site involves Cys117. Asn118 carries an N-linked (GlcNAc...) asparagine glycan. An N-linked (GlcNAc...) asparagine glycan is attached at Asn177. The active site involves Cys199. N-linked (GlcNAc...) asparagine glycans are attached at residues Asn207 and Asn268. Intrachain disulfides connect Cys252/Cys273 and Cys285/Cys294.

It belongs to the ADP-ribosyl cyclase family. As to quaternary structure, homodimer. As to expression, osteoclasts.

The protein localises to the cell membrane. The protein resides in the microsome membrane. Its subcellular location is the endoplasmic reticulum membrane. It carries out the reaction NAD(+) = cyclic ADP-beta-D-ribose + nicotinamide + H(+). The catalysed reaction is 2'-phospho-cyclic ADP-ribose + nicotinate = nicotinate-adenine dinucleotide phosphate. The enzyme catalyses NAD(+) + H2O = ADP-D-ribose + nicotinamide + H(+). It catalyses the reaction nicotinate + NADP(+) = nicotinate-adenine dinucleotide phosphate + nicotinamide. Its function is as follows. Synthesizes cyclic ADP-ribose (cADPR), a second messenger for glucose-induced insulin secretion. Synthesizes the Ca(2+) mobilizer nicotinate-adenine dinucleotide phosphate, NAADP(+), from 2'-phospho-cADPR and nicotinic acid, as well as from NADP(+) and nicotinic acid. Also has cADPR hydrolase activity. The protein is ADP-ribosyl cyclase/cyclic ADP-ribose hydrolase 1 (CD38) of Oryctolagus cuniculus (Rabbit).